A 310-amino-acid chain; its full sequence is Serine protease 30 (310 aa).

Residues 1-21 (MESRARCIFLLLLQILTRARG) form the signal peptide. Residues 22-36 (DILPSVCGHSRDAGK) constitute a propeptide, activation peptide. One can recognise a Peptidase S1 domain in the interval 37–277 (IVGGQDALEG…YVDWIQRILA (241 aa)). Cysteines 63 and 79 form a disulfide. Catalysis depends on charge relay system residues His-78 and Asp-128. 3 cysteine pairs are disulfide-bonded: Cys-161-Cys-235, Cys-191-Cys-214, and Cys-225-Cys-253. Ser-229 acts as the Charge relay system in catalysis. Asn-238 and Asn-279 each carry an N-linked (GlcNAc...) asparagine glycan. A lipid anchor (GPI-anchor amidated serine) is attached at Ser-281. Positions 282–310 (DAYGYHSSASAAYQMLLPVLLAVALPGSL) are cleaved as a propeptide — removed in mature form.

It belongs to the peptidase S1 family. Expressed primarily in distal gut.

It is found in the cell membrane. Its activity is regulated as follows. Inhibited by aprotinin, leupeptin, benzamidine and soybean trypsin inhibitor. Partially inhibited by PMSF and DFP. In terms of biological role, selectively cleaves synthetic peptide substrates of trypsin. Activates the epithelial sodium channel ENaC. The chain is Serine protease 30 (Prss30) from Mus musculus (Mouse).